We begin with the raw amino-acid sequence, 208 residues long: MSNAASPATSAAPVRHYPMSCRTLATQEQIWSATAKCAKQIAEDYKQYNLSDENPLYLLCVLKGSFMFTADLARFLCDEGVPVRIEFICASSYGTDVKTSGEVRLLLDVRDPVENRHLLIVEDIVDSAITLEYLKRFLQAKQPASLKTVVLLDKPSGRKVTLSVDYPVITIPHAFVIGYGMDFAEAYRELRDVCVLKKEYYEKPASKL.

GMP contacts are provided by residues Lys63, 122-130 (EDIVDSAIT), Lys154, and Asp182. The Proton acceptor role is filled by Asp126. Asp182 provides a ligand contact to Mg(2+).

This sequence belongs to the purine/pyrimidine phosphoribosyltransferase family. Mg(2+) serves as cofactor.

It localises to the cytoplasm. It catalyses the reaction IMP + diphosphate = hypoxanthine + 5-phospho-alpha-D-ribose 1-diphosphate. The enzyme catalyses GMP + diphosphate = guanine + 5-phospho-alpha-D-ribose 1-diphosphate. It functions in the pathway purine metabolism; IMP biosynthesis via salvage pathway; IMP from hypoxanthine: step 1/1. Converts guanine to guanosine monophosphate, and hypoxanthine to inosine monophosphate. Transfers the 5-phosphoribosyl group from 5-phosphoribosylpyrophosphate onto the purine. Plays a central role in the generation of purine nucleotides through the purine salvage pathway. The polypeptide is Hypoxanthine-guanine phosphoribosyltransferase (HGPRT) (Crithidia fasciculata).